Reading from the N-terminus, the 137-residue chain is MRNSDLAPLYRSAIGFDRLFNLLESGQNQSNGGYPPYNVELVDENNYRIAIAVAGFAEQELEITTQDNLLIVRGSHANEPAQRTYLYQGIAERNFERKFQLAEHIKIKGANLVNGLLYIDLERLVPESLKPRRIEIK.

In terms of domain architecture, sHSP spans 28–137 (NQSNGGYPPY…SLKPRRIEIK (110 aa)).

Belongs to the small heat shock protein (HSP20) family. Monomer. Forms homomultimers of about 100-150 subunits at optimal growth temperatures. Conformation changes to monomers at high temperatures or high ionic concentrations.

It localises to the cytoplasm. Functionally, associates with aggregated proteins, together with IbpB, to stabilize and protect them from irreversible denaturation and extensive proteolysis during heat shock and oxidative stress. Aggregated proteins bound to the IbpAB complex are more efficiently refolded and reactivated by the ATP-dependent chaperone systems ClpB and DnaK/DnaJ/GrpE. Its activity is ATP-independent. The chain is Small heat shock protein IbpA from Yersinia pseudotuberculosis serotype O:1b (strain IP 31758).